The chain runs to 184 residues: Peptidyl-tRNA hydrolase (184 aa).

Tyr14 provides a ligand contact to tRNA. His19 serves as the catalytic Proton acceptor. TRNA-binding residues include Phe64, Asn66, and Asn112.

The protein belongs to the PTH family. Monomer.

It localises to the cytoplasm. It carries out the reaction an N-acyl-L-alpha-aminoacyl-tRNA + H2O = an N-acyl-L-amino acid + a tRNA + H(+). Hydrolyzes ribosome-free peptidyl-tRNAs (with 1 or more amino acids incorporated), which drop off the ribosome during protein synthesis, or as a result of ribosome stalling. Functionally, catalyzes the release of premature peptidyl moieties from peptidyl-tRNA molecules trapped in stalled 50S ribosomal subunits, and thus maintains levels of free tRNAs and 50S ribosomes. In Listeria innocua serovar 6a (strain ATCC BAA-680 / CLIP 11262), this protein is Peptidyl-tRNA hydrolase.